A 523-amino-acid polypeptide reads, in one-letter code: Apoptosis inhibitor 5 (523 aa).

The tract at residues 1 to 360 (MPTVEELYRN…HQLGRKLPDF (360 aa)) is ARM-like and Heat-like helical repeats. The disordered stretch occupies residues 446–523 (VQKADANQKR…RGNRSRGRIY (78 aa)). A Nuclear localization signal motif is present at residues 454–475 (KRTSEDTTSSSPPKKASAGPKR). A compositionally biased stretch (low complexity) spans 460–471 (TTSSSPPKKASA). The segment covering 487–497 (KYSSNLGSFSY) has biased composition (polar residues). The segment covering 502 to 515 (GFRGGRGRGWGGRG) has biased composition (gly residues).

Belongs to the API5 family. As to quaternary structure, monomer.

It localises to the nucleus. The protein resides in the cytoplasm. Functionally, antiapoptotic factor that may have a role in protein assembly. This Gallus gallus (Chicken) protein is Apoptosis inhibitor 5 (API5).